Consider the following 150-residue polypeptide: UPF0178 protein PputGB1_5282 (150 aa).

This sequence belongs to the UPF0178 family.

The chain is UPF0178 protein PputGB1_5282 from Pseudomonas putida (strain GB-1).